We begin with the raw amino-acid sequence, 378 residues long: Cytochrome b (378 aa).

4 helical membrane passes run 34–54, 78–99, 114–134, and 179–199; these read FGSL…FLAM, WFLR…FMHV, WNTG…GYVL, and FFTF…IHLL. Positions 84 and 98 each coordinate heme b. Residues His183 and His197 each coordinate heme b. Residue His202 coordinates a ubiquinone. 4 helical membrane-spanning segments follow: residues 227–247, 289–309, 321–341, and 348–368; these read YKDI…IWKF, LGGV…PFTH, LNQI…WIGA, and YVLT…INPL.

This sequence belongs to the cytochrome b family. As to quaternary structure, the main subunits of complex b-c1 are: cytochrome b, cytochrome c1 and the Rieske protein. It depends on heme b as a cofactor.

The protein resides in the mitochondrion inner membrane. Component of the ubiquinol-cytochrome c reductase complex (complex III or cytochrome b-c1 complex) that is part of the mitochondrial respiratory chain. The b-c1 complex mediates electron transfer from ubiquinol to cytochrome c. Contributes to the generation of a proton gradient across the mitochondrial membrane that is then used for ATP synthesis. In Anopheles quadrimaculatus (Common malaria mosquito), this protein is Cytochrome b (MT-CYB).